The chain runs to 515 residues: Cytidine and dCMP deaminase domain-containing protein 1 (515 aa).

Polar residues-rich tracts occupy residues 1–11 and 18–27; these read MKEAGQMQNLE and SVSTQTGSMT. Disordered regions lie at residues 1 to 27 and 56 to 83; these read MKEAGQMQNLESARAGRSVSTQTGSMT and RQKSQKNEEGKHGPLGDNEEMTRVSTDK. The segment covering 60-83 has biased composition (basic and acidic residues); it reads QKNEEGKHGPLGDNEEMTRVSTDK. The region spanning 71–169 is the CMP/dCMP-type deaminase 1 domain; it reads GDNEEMTRVS…SLLTEASSSE (99 aa). Residues histidine 110, cysteine 135, and cysteine 138 each coordinate Zn(2+). A Nuclear export signal motif is present at residues 272-284; the sequence is NLRQNMKDLILLL. Positions 318 to 483 constitute a CMP/dCMP-type deaminase 2 domain; it reads EIARHCMVQA…LNPSEAYGLE (166 aa). Histidine 399 is a binding site for Zn(2+). Glutamate 401 acts as the Proton donor in catalysis. 2 residues coordinate Zn(2+): cysteine 427 and cysteine 430. The interval 481 to 515 is disordered; it reads GLEQNEPERRENGVLRPVPQKEEQHQDKKLRLGIH. Over residues 486–515 the composition is skewed to basic and acidic residues; the sequence is EPERRENGVLRPVPQKEEQHQDKKLRLGIH. A Bipartite nuclear localization signal motif is present at residues 489-511; that stretch reads RRENGVLRPVPQKEEQHQDKKLR.

The protein belongs to the cytidine and deoxycytidylate deaminase family. Zn(2+) is required as a cofactor.

Its subcellular location is the cytoplasm. It localises to the nucleus. It carries out the reaction 2'-deoxycytidine + H2O + H(+) = 2'-deoxyuridine + NH4(+). It catalyses the reaction cytidine + H2O + H(+) = uridine + NH4(+). Catalyzes the deamination of cytidine and deoxycytidine into uridine and deoxyuridine, respectively. May play an important role in testicular development and spermatogenesis. The chain is Cytidine and dCMP deaminase domain-containing protein 1 (CDADC1) from Macaca fascicularis (Crab-eating macaque).